Reading from the N-terminus, the 348-residue chain is Dihydroorotase (348 aa).

Zn(2+) contacts are provided by His-14 and His-16. Substrate-binding positions include 16–18 and Asn-42; that span reads HLR. Zn(2+) contacts are provided by Lys-100, His-137, and His-175. Lys-100 carries the post-translational modification N6-carboxylysine. Residue His-137 coordinates substrate. Residue Leu-220 participates in substrate binding. Asp-248 contributes to the Zn(2+) binding site. Residue Asp-248 is part of the active site. 2 residues coordinate substrate: His-252 and Ala-264.

The protein belongs to the metallo-dependent hydrolases superfamily. DHOase family. Class II DHOase subfamily. In terms of assembly, homodimer. Zn(2+) serves as cofactor.

The catalysed reaction is (S)-dihydroorotate + H2O = N-carbamoyl-L-aspartate + H(+). The protein operates within pyrimidine metabolism; UMP biosynthesis via de novo pathway; (S)-dihydroorotate from bicarbonate: step 3/3. Catalyzes the reversible cyclization of carbamoyl aspartate to dihydroorotate. The sequence is that of Dihydroorotase from Pseudomonas putida (strain ATCC 700007 / DSM 6899 / JCM 31910 / BCRC 17059 / LMG 24140 / F1).